The sequence spans 157 residues: UPF0251 protein CLK_0815 (157 aa).

The protein belongs to the UPF0251 family.

In Clostridium botulinum (strain Loch Maree / Type A3), this protein is UPF0251 protein CLK_0815.